The primary structure comprises 178 residues: MSRVGKYPVEVPAGVQVSVADGFFKAKGKLGELTVPVSRHVEVKIEGSNVSVAPVGRRSRENWTMWGTTRALIANTVKGVSDGFSKGLEIQGTGFRAAVQGSNLVMNLGFSHDVVYPIPEGIKITTPRPTAIVVEGNDKQRVGQVALDIRSFRKPEPYKGKGVRYETEVLRRKEGKKK.

This sequence belongs to the universal ribosomal protein uL6 family. As to quaternary structure, part of the 50S ribosomal subunit.

Its function is as follows. This protein binds to the 23S rRNA, and is important in its secondary structure. It is located near the subunit interface in the base of the L7/L12 stalk, and near the tRNA binding site of the peptidyltransferase center. This chain is Large ribosomal subunit protein uL6, found in Gluconobacter oxydans (strain 621H) (Gluconobacter suboxydans).